The sequence spans 1251 residues: DNA repair protein REV1 (1251 aa).

Residues 44–131 (TSSTIFSGVA…RLLSYIPYQL (88 aa)) form the BRCT domain. Disordered stretches follow at residues 206 to 236 (TSPGRKQNGIPHPRGSTAIFNGHTPSSNGAL) and 282 to 342 (STRN…VPSK). Positions 282–320 (STRNTDALRNPHRTNSFSLSPLHSNTKINGAHHSTVQGP) are enriched in polar residues. A compositionally biased stretch (low complexity) spans 321-342 (SSTKSTSSVSTFSKAAPSVPSK). The segment at 352–362 (FYSHSRLHHIS) is interaction with target DNA. DCTP is bound by residues R357, 423–427 (DMDCF), 510–516 (SCSYEAR), N522, and D570. Residues 419–653 (IMHVDMDCFF…QLVTNLPGVG (235 aa)) enclose the UmuC domain. D423 contacts Mg(2+). 2 residues coordinate Mg(2+): D570 and E571. 2 interaction with target DNA regions span residues 653–656 (GHSM) and 709–717 (RKSVSAEIN). 2 disordered regions span residues 1035 to 1096 (AYDQ…KLLN) and 1119 to 1147 (HEGPPAEKPLEELSASTSGVPGLSSLQSD). Positions 1043-1056 (GENSTHQQSASASV) are enriched in polar residues. Residues 1070-1079 (EKKRNKKKKT) show a composition bias toward basic residues. The Nuclear localization signal motif lies at 1071-1078 (KKRNKKKK). Over residues 1119-1129 (HEGPPAEKPLE) the composition is skewed to basic and acidic residues. The span at 1132–1146 (SASTSGVPGLSSLQS) shows a compositional bias: polar residues. The protein interaction domain; mediates interaction with DNA polymerase zeta stretch occupies residues 1150–1249 (GCVRPPAPNL…LQQTYGSTLK (100 aa)).

It belongs to the DNA polymerase type-Y family. Monomer. Interacts with the DNA polymerase zeta which is composed of REV3L and MAD2L2; the interaction with MAD2L2 is direct and requires that REV3L is in its closed conformation. Interacts with POLH, POLI and POLK. May bind ITGA3. Interacts with FAAP20/C1orf86. As to expression, ubiquitous.

Its subcellular location is the nucleus. In terms of biological role, deoxycytidyl transferase involved in DNA repair. Transfers a dCMP residue from dCTP to the 3'-end of a DNA primer in a template-dependent reaction. May assist in the first step in the bypass of abasic lesions by the insertion of a nucleotide opposite the lesion. Required for normal induction of mutations by physical and chemical agents. The chain is DNA repair protein REV1 (REV1) from Homo sapiens (Human).